The primary structure comprises 373 residues: Meiosis-specific kinetochore protein (373 aa).

Disordered regions lie at residues 1 to 91 (MWPL…QDEK) and 250 to 276 (STPE…LTST). A compositionally biased stretch (basic and acidic residues) spans 77–91 (SLQENRSSEDTQDEK). A POLO box domain (PBD)-binding motif is present at residues 275–277 (STP). The required for localization to kinetochores stretch occupies residues 332–335 (EICC).

Interacts with CENPC. Interacts with PLK1; required for recruitment of PLK1 at kinetochores.

The protein resides in the chromosome. It localises to the centromere. It is found in the kinetochore. Key regulator of kinetochore function during meiosis I: required both for mono-orientation of kinetochores on sister chromosomes and protection of centromeric cohesin from separase-mediated cleavage. Acts by facilitating kinetochore mono-orientation during meiosis I, when kinetochores on sister chromosomes face the same direction and are thus captured and pulled by spindle fibers from the same pole. Also required to prevent cleavage of cohesin at centromeres during meiosis I, possibly by acting as a regulator of the shugoshin-dependent protection pathway. Acts in collaboration with PLK1: required for PLK1 enrichment to kinetochores. Not required during meiosis II or mitosis. This Homo sapiens (Human) protein is Meiosis-specific kinetochore protein.